Reading from the N-terminus, the 184-residue chain is Trypsin/chymotrypsin inhibitor (184 aa).

Intrachain disulfides connect C39-C84 and C136-C147.

This sequence belongs to the protease inhibitor I3 (leguminous Kunitz-type inhibitor) family. As to quaternary structure, homodimer.

In terms of biological role, inhibits trypsin and alpha-chymotrypsin. This is Trypsin/chymotrypsin inhibitor from Alocasia macrorrhizos (Giant taro).